Here is a 324-residue protein sequence, read N- to C-terminus: NAD(P)H-dependent D-xylose reductase xyl1 (324 aa).

Tyr-50 functions as the Proton donor in the catalytic mechanism. A substrate-binding site is contributed by His-112. NAD(+)-binding positions include 168-169, 217-226, and 273-283; these read SN, SSFGPTGFME, and KTSRPEVMAQN.

The protein belongs to the aldo/keto reductase family.

It carries out the reaction an alditol + NAD(+) = an aldose + NADH + H(+). The catalysed reaction is an alditol + NADP(+) = an aldose + NADPH + H(+). It catalyses the reaction xylitol + NAD(+) = D-xylose + NADH + H(+). The enzyme catalyses xylitol + NADP(+) = D-xylose + NADPH + H(+). The protein operates within carbohydrate metabolism; D-xylose degradation. It functions in the pathway carbohydrate degradation; L-arabinose degradation via L-arabinitol; D-xylulose 5-phosphate from L-arabinose (fungal route): step 1/5. Its function is as follows. Catalyzes the initial reaction in the xylose utilization pathway by reducing D-xylose into xylitol. Xylose is a major component of hemicelluloses such as xylan. Most fungi utilize D-xylose via three enzymatic reactions, xylose reductase (XR), xylitol dehydrogenase (XDH), and xylulokinase, to form xylulose 5-phosphate, which enters pentose phosphate pathway. Also major aldose reductase in pentose and D-galactose catabolism. Reduces the pentose L-arabinose and the hexose D-galactose to their respective polyols. Responsible for extracellular beta-galactosidase formation and cellulase induction during growth on lactose. The polypeptide is NAD(P)H-dependent D-xylose reductase xyl1 (xyl1) (Hypocrea jecorina (Trichoderma reesei)).